Here is a 475-residue protein sequence, read N- to C-terminus: GlcNAc-binding protein A (475 aa).

Positions 1–27 are cleaved as a signal peptide; it reads MPKLTQLSLVTLALTAGSTLVSQTASA. The Chitin-binding type-4 domain occupies 28-195; that stretch reads HGYVVSPESR…SFYNAIDVNF (168 aa). In terms of domain architecture, Chitin-binding type-3 spans 426–468; it reads AGTKVLQPKTGKVYQCKPWPYNGYCVQWSPTATGFEPGIGNSW.

It belongs to the GbpA family.

It localises to the secreted. Its function is as follows. Probably interacts with GlcNAc residues. May promote attachment to both epithelial cell surfaces and chitin. This Shewanella oneidensis (strain ATCC 700550 / JCM 31522 / CIP 106686 / LMG 19005 / NCIMB 14063 / MR-1) protein is GlcNAc-binding protein A.